A 261-amino-acid polypeptide reads, in one-letter code: General secretion pathway protein N (261 aa).

The Cytoplasmic portion of the chain corresponds to 1 to 10 (MRLEMIGLRT). A helical transmembrane segment spans residues 11–31 (WLLATVVGWALLVCVLAVAGL). The Periplasmic segment spans residues 32–261 (GKRVELLPDD…QGGSTPGQTQ (230 aa)). The segment at 158–261 (VFNGQGGQPP…QGGSTPGQTQ (104 aa)) is disordered. Over residues 179–200 (AVPPLPPNVPPAPATPAPPPAE) the composition is skewed to pro residues. The span at 201–211 (VPQQQPGGQAP) shows a compositional bias: low complexity. A compositionally biased stretch (basic and acidic residues) spans 227 to 244 (RPSDEQMRAIRERIEARR).

As to quaternary structure, binds to XpsD.

Its subcellular location is the cell inner membrane. Its function is as follows. Involved in a general secretion pathway (GSP) for the export of proteins. This Xanthomonas campestris pv. campestris (strain ATCC 33913 / DSM 3586 / NCPPB 528 / LMG 568 / P 25) protein is General secretion pathway protein N (xpsN).